The primary structure comprises 491 residues: Ketol-acid reductoisomerase (NADP(+)) (491 aa).

One can recognise a KARI N-terminal Rossmann domain in the interval 15–208 (AQLGKCRFMG…GGHRAGVLES (194 aa)). NADP(+) contacts are provided by residues 45–48 (CGAQ), Arg68, Arg76, Ser78, and 108–110 (DKQ). Residue His132 is part of the active site. Gly158 is a binding site for NADP(+). KARI C-terminal knotted domains are found at residues 209 to 344 (SFVA…TAPQ) and 345 to 484 (FEGK…MTDM). The Mg(2+) site is built by Asp217, Glu221, Glu389, and Glu393. Ser414 provides a ligand contact to substrate.

The protein belongs to the ketol-acid reductoisomerase family. Mg(2+) serves as cofactor.

It carries out the reaction (2R)-2,3-dihydroxy-3-methylbutanoate + NADP(+) = (2S)-2-acetolactate + NADPH + H(+). The enzyme catalyses (2R,3R)-2,3-dihydroxy-3-methylpentanoate + NADP(+) = (S)-2-ethyl-2-hydroxy-3-oxobutanoate + NADPH + H(+). Its pathway is amino-acid biosynthesis; L-isoleucine biosynthesis; L-isoleucine from 2-oxobutanoate: step 2/4. It functions in the pathway amino-acid biosynthesis; L-valine biosynthesis; L-valine from pyruvate: step 2/4. In terms of biological role, involved in the biosynthesis of branched-chain amino acids (BCAA). Catalyzes an alkyl-migration followed by a ketol-acid reduction of (S)-2-acetolactate (S2AL) to yield (R)-2,3-dihydroxy-isovalerate. In the isomerase reaction, S2AL is rearranged via a Mg-dependent methyl migration to produce 3-hydroxy-3-methyl-2-ketobutyrate (HMKB). In the reductase reaction, this 2-ketoacid undergoes a metal-dependent reduction by NADPH to yield (R)-2,3-dihydroxy-isovalerate. The protein is Ketol-acid reductoisomerase (NADP(+)) of Salmonella agona (strain SL483).